A 72-amino-acid chain; its full sequence is Defensin-like protein 230 (72 aa).

The signal sequence occupies residues 1–27 (MEKKSLACLSFLLLVLFVAQEIVVSEA). 4 disulfide bridges follow: C30–C72, C41–C60, C45–C66, and C49–C68.

The protein belongs to the DEFL family.

It is found in the secreted. This chain is Defensin-like protein 230 (PI230), found in Pisum sativum (Garden pea).